We begin with the raw amino-acid sequence, 307 residues long: tRNA dimethylallyltransferase (307 aa).

6 to 13 (GATATGKT) is an ATP binding site. 8-13 (TATGKT) serves as a coordination point for substrate. Residues 31–34 (DSMM) are interaction with substrate tRNA.

Belongs to the IPP transferase family. In terms of assembly, monomer. It depends on Mg(2+) as a cofactor.

The enzyme catalyses adenosine(37) in tRNA + dimethylallyl diphosphate = N(6)-dimethylallyladenosine(37) in tRNA + diphosphate. Functionally, catalyzes the transfer of a dimethylallyl group onto the adenine at position 37 in tRNAs that read codons beginning with uridine, leading to the formation of N6-(dimethylallyl)adenosine (i(6)A). The chain is tRNA dimethylallyltransferase from Sulfurihydrogenibium sp. (strain YO3AOP1).